Consider the following 435-residue polypeptide: Zinc finger CCCH domain-containing protein 67 (435 aa).

The disordered stretch occupies residues 1-91 (MSKPEETSDP…DQKEEEEGSE (91 aa)). 3 consecutive C3H1-type zinc fingers follow at residues 101–129 (RPDS…HPVR), 148–176 (NPKL…HMKE), and 194–222 (RPGE…HPDP). The segment at 235-274 (GNNGGSFSPKAPSQASSTSWSSTRHMNGTGTAPFIPSMFP) is disordered. Low complexity predominate over residues 247–256 (SQASSTSWSS). C3H1-type zinc fingers lie at residues 334–362 (RPDQ…HPKN) and 380–408 (RPDQ…HSIP). The segment at 412 to 435 (SPSSSQTVEARQVGANGNEDDSWH) is disordered.

It localises to the nucleus. This is Zinc finger CCCH domain-containing protein 67 from Arabidopsis thaliana (Mouse-ear cress).